A 456-amino-acid polypeptide reads, in one-letter code: 3-isopropylmalate dehydratase large subunit (456 aa).

Cysteine 336, cysteine 396, and cysteine 399 together coordinate [4Fe-4S] cluster.

Belongs to the aconitase/IPM isomerase family. LeuC type 1 subfamily. Heterodimer of LeuC and LeuD. The cofactor is [4Fe-4S] cluster.

It carries out the reaction (2R,3S)-3-isopropylmalate = (2S)-2-isopropylmalate. Its pathway is amino-acid biosynthesis; L-leucine biosynthesis; L-leucine from 3-methyl-2-oxobutanoate: step 2/4. Its function is as follows. Catalyzes the isomerization between 2-isopropylmalate and 3-isopropylmalate, via the formation of 2-isopropylmaleate. The protein is 3-isopropylmalate dehydratase large subunit of Staphylococcus epidermidis (strain ATCC 12228 / FDA PCI 1200).